The chain runs to 54 residues: Large ribosomal subunit protein bL33A (54 aa).

It belongs to the bacterial ribosomal protein bL33 family.

This chain is Large ribosomal subunit protein bL33A, found in Streptomyces griseus subsp. griseus (strain JCM 4626 / CBS 651.72 / NBRC 13350 / KCC S-0626 / ISP 5235).